The chain runs to 32 residues: Beta-amanitin proprotein (32 aa).

A propeptide spanning residues 1–10 (MSDINATRLP) is cleaved from the precursor. A cross-link (cyclopeptide (Ile-Pro)) is located at residues 11-18 (IWGIGCDP). Positions 12 to 16 (WGIGC) form a cross-link, 2'-cysteinyl-6'-hydroxytryptophan sulfoxide (Trp-Cys). A propeptide spanning residues 19–32 (CIGDDVTILLTRGE) is cleaved from the precursor.

It belongs to the MSDIN fungal toxin family. Post-translationally, processed by the macrocyclase-peptidase enzyme POPB to yield a toxic cyclic decapeptide. POPB first removes 10 residues from the N-terminus. Conformational trapping of the remaining peptide forces the enzyme to release this intermediate rather than proceed to macrocyclization. The enzyme rebinds the remaining peptide in a different conformation and catalyzes macrocyclization of the N-terminal 8 residues.

In terms of biological role, toxin belonging to the bicyclic octapeptides amatoxins that acts by binding non-competitively to RNA polymerase II and greatly slowing the elongation of transcripts from target promoters. The chain is Beta-amanitin proprotein from Amanita phalloides (Death cap).